The primary structure comprises 333 residues: MSEIGTRVYTECDADLSLIQNVLVAVIGYGSQGHAQALNLRDSGVNVVIGLKENSASRKSAQDSGFEVLLPQEAAKKAQLIALLVPDPAQRDVYESAIKHNLSEGDALLFSHGFNIRYGYITPPDGVDVLMVAPKGPGHMVRREYLDNRGTPAVFAIEKDASGRCFDLALSYAKGIGALRAGAIQTTFTEETETDLFGEQAVLCGGLEQLIQYGYETLVEAGYQPEVAYFEVLHELKLIIDLIVEGGLSKSRWSISDTAEYGSYVSGPRVIDKHVKENMKKILGEIRSGEFANRFIKDQDSGANEFTQLREIAARHPIEEVGARLRALFSWSK.

A KARI N-terminal Rossmann domain is found at 6 to 186 (TRVYTECDAD…GALRAGAIQT (181 aa)). Residues 29-32 (YGSQ), K52, S55, S57, and 87-90 (DPAQ) contribute to the NADP(+) site. The active site involves H112. An NADP(+)-binding site is contributed by G138. The 146-residue stretch at 187 to 332 (TFTEETETDL…ARLRALFSWS (146 aa)) folds into the KARI C-terminal knotted domain. Residues D195, E199, E231, and E235 each contribute to the Mg(2+) site. A substrate-binding site is contributed by S256.

This sequence belongs to the ketol-acid reductoisomerase family. Requires Mg(2+) as cofactor.

It carries out the reaction (2R)-2,3-dihydroxy-3-methylbutanoate + NADP(+) = (2S)-2-acetolactate + NADPH + H(+). The enzyme catalyses (2R,3R)-2,3-dihydroxy-3-methylpentanoate + NADP(+) = (S)-2-ethyl-2-hydroxy-3-oxobutanoate + NADPH + H(+). It functions in the pathway amino-acid biosynthesis; L-isoleucine biosynthesis; L-isoleucine from 2-oxobutanoate: step 2/4. It participates in amino-acid biosynthesis; L-valine biosynthesis; L-valine from pyruvate: step 2/4. Functionally, involved in the biosynthesis of branched-chain amino acids (BCAA). Catalyzes an alkyl-migration followed by a ketol-acid reduction of (S)-2-acetolactate (S2AL) to yield (R)-2,3-dihydroxy-isovalerate. In the isomerase reaction, S2AL is rearranged via a Mg-dependent methyl migration to produce 3-hydroxy-3-methyl-2-ketobutyrate (HMKB). In the reductase reaction, this 2-ketoacid undergoes a metal-dependent reduction by NADPH to yield (R)-2,3-dihydroxy-isovalerate. The sequence is that of Ketol-acid reductoisomerase (NADP(+)) from Tropheryma whipplei (strain TW08/27) (Whipple's bacillus).